Here is a 360-residue protein sequence, read N- to C-terminus: Protein Wnt-2 (360 aa).

The signal sequence occupies residues 1-25; the sequence is MNACLVGIWLWLPLLFTWLSPEVSS. Cystine bridges form between Cys76–Cys87, Cys127–Cys135, Cys137–Cys157, Cys206–Cys220, Cys208–Cys215, Cys278–Cys309, Cys294–Cys304, Cys308–Cys348, Cys324–Cys339, Cys326–Cys336, and Cys331–Cys332. A lipid anchor (O-palmitoleoyl serine; by PORCN) is attached at Ser212. Asn295 carries an N-linked (GlcNAc...) asparagine glycan.

This sequence belongs to the Wnt family. Post-translationally, palmitoleoylation is required for efficient binding to frizzled receptors. Depalmitoleoylation leads to Wnt signaling pathway inhibition.

The protein resides in the secreted. Its subcellular location is the extracellular space. It is found in the extracellular matrix. Its function is as follows. Ligand for members of the frizzled family of seven transmembrane receptors. Probable developmental protein. May be a signaling molecule which affects the development of discrete regions of tissues. Is likely to signal over only few cell diameters. The chain is Protein Wnt-2 (WNT2) from Muntiacus muntjak (Barking deer).